We begin with the raw amino-acid sequence, 382 residues long: Succinate--CoA ligase [ADP-forming] subunit beta (382 aa).

Residues 9-240 (KELFSKYGVK…PRDVSEFEMY (232 aa)) enclose the ATP-grasp domain. ATP-binding positions include lysine 45, 52–54 (GRG), valine 94, and glutamate 99. Mg(2+) is bound by residues asparagine 193 and aspartate 207. Substrate is bound by residues asparagine 260 and 317 to 319 (GIT).

The protein belongs to the succinate/malate CoA ligase beta subunit family. As to quaternary structure, heterotetramer of two alpha and two beta subunits. The cofactor is Mg(2+).

It catalyses the reaction succinate + ATP + CoA = succinyl-CoA + ADP + phosphate. It carries out the reaction GTP + succinate + CoA = succinyl-CoA + GDP + phosphate. It functions in the pathway carbohydrate metabolism; tricarboxylic acid cycle; succinate from succinyl-CoA (ligase route): step 1/1. Functionally, succinyl-CoA synthetase functions in the citric acid cycle (TCA), coupling the hydrolysis of succinyl-CoA to the synthesis of either ATP or GTP and thus represents the only step of substrate-level phosphorylation in the TCA. The beta subunit provides nucleotide specificity of the enzyme and binds the substrate succinate, while the binding sites for coenzyme A and phosphate are found in the alpha subunit. The sequence is that of Succinate--CoA ligase [ADP-forming] subunit beta from Pyrobaculum arsenaticum (strain DSM 13514 / JCM 11321 / PZ6).